The primary structure comprises 358 residues: uncharacterized protein (358 aa).

Position 29 to 36 (29 to 36 (GPINSGKT)) interacts with ATP.

This sequence belongs to the archaeal ATPase family.

This is an uncharacterized protein from Methanocaldococcus jannaschii (strain ATCC 43067 / DSM 2661 / JAL-1 / JCM 10045 / NBRC 100440) (Methanococcus jannaschii).